The primary structure comprises 511 residues: Cytochrome P450 4A7 (511 aa).

A propeptide spanning residues 1–4 (MSVS) is cleaved from the precursor. Heme-binding residues include Glu322 and Cys458.

Belongs to the cytochrome P450 family. The cofactor is heme. In terms of tissue distribution, liver, kidney, small intestine.

It localises to the endoplasmic reticulum membrane. Its subcellular location is the microsome membrane. It catalyses the reaction an omega-methyl-long-chain fatty acid + reduced [NADPH--hemoprotein reductase] + O2 = an omega-hydroxy-long-chain fatty acid + oxidized [NADPH--hemoprotein reductase] + H2O + H(+). Functionally, cytochromes P450 are a group of heme-thiolate monooxygenases. In liver microsomes, this enzyme is involved in an NADPH-dependent electron transport pathway. It oxidizes a variety of structurally unrelated compounds, including steroids, fatty acids, and xenobiotics. The kidney P-450 system is rather specialized for the omega-hydroxylation of fatty acids. Both P450-KA1 and P450-KA2 catalyze the omega- and (omega-1)-hydroxylation of various fatty acids with no drug-metabolizing activity, and hydroxylate prostaglandin A1 and A2 solely at the omega-position. In Oryctolagus cuniculus (Rabbit), this protein is Cytochrome P450 4A7 (CYP4A7).